Consider the following 406-residue polypeptide: MSLLDTLQRGLADLDAQGLRRVRRIAYTACDAHMTVNGREIVGFASNDYLGLAAHPALVAAFAEGAQRYGSGSGGSHLLGGHSRAHARLEDELAGFAGGFSDAPRALYFSTGYMANLAAMTALAGKGATIFSDALNHASLIDGMRLSRANVQVYPHADTAALAALLDASAAETKLIVSDTVFSMDGDIAPLTELVALAERHGAWLVVDDAHGFGVLGPQGRGALAAAALRSPHLVYVGTLGKAAGVAGAFVIAHETVIEWLIQRARSYIFTTAAPPAVAHAVSASLKVIAGDEGDARRAHLAALIERTRALLRNTRWQPVDSHTAVQPLVIGSNDATLAAMRALDAHGLWVPAIRPPTVPAGTSRLRVSLSAAHSFDDLARLEAALIEASEAAAASVGAARQEAAA.

Residue R21 participates in substrate binding. 112-113 (GY) is a pyridoxal 5'-phosphate binding site. H137 is a binding site for substrate. Pyridoxal 5'-phosphate-binding residues include S183, H211, and T239. K242 is modified (N6-(pyridoxal phosphate)lysine). Position 358 (T358) interacts with substrate.

The protein belongs to the class-II pyridoxal-phosphate-dependent aminotransferase family. BioF subfamily. As to quaternary structure, homodimer. The cofactor is pyridoxal 5'-phosphate.

The catalysed reaction is 6-carboxyhexanoyl-[ACP] + L-alanine + H(+) = (8S)-8-amino-7-oxononanoate + holo-[ACP] + CO2. It participates in cofactor biosynthesis; biotin biosynthesis. Functionally, catalyzes the decarboxylative condensation of pimeloyl-[acyl-carrier protein] and L-alanine to produce 8-amino-7-oxononanoate (AON), [acyl-carrier protein], and carbon dioxide. This Burkholderia orbicola (strain MC0-3) protein is 8-amino-7-oxononanoate synthase.